We begin with the raw amino-acid sequence, 313 residues long: Apolipoprotein E (313 aa).

The N-terminal stretch at Met1–Ala18 is a signal peptide. 8 consecutive repeat copies span residues Val79–Gly100, Pro101–Ala122, Ser123–Gly144, Gln145–Leu166, Arg167–Glu188, Arg189–Ala209, Gly210–Arg229, and Gly230–Glu251. Positions Val79–Glu251 are 8 X 22 AA approximate tandem repeats. The segment at His157–Arg167 is LDL and other lipoprotein receptors binding. Leu161–Arg164 serves as a coordination point for heparin. The tract at residues Ala209–Met286 is lipid-binding and lipoprotein association. His225–Val232 is a heparin binding site. Positions Ser262–His313 are homooligomerization. The interval Arg274 to Met286 is specificity for association with VLDL.

It belongs to the apolipoprotein A1/A4/E family. As to quaternary structure, homotetramer. May interact with ABCA1; functionally associated with ABCA1 in the biogenesis of HDLs. May interact with APP/A4 amyloid-beta peptide; the interaction is extremely stable in vitro but its physiological significance is unclear. May interact with MAPT. May interact with MAP2. In the cerebrospinal fluid, interacts with secreted SORL1. Interacts with PMEL; this allows the loading of PMEL luminal fragment on ILVs to induce fibril nucleation. Post-translationally, APOE exists as multiple glycosylated and sialylated glycoforms within cells and in plasma. The extent of glycosylation and sialylation are tissue and context specific. Glycated in plasma VLDL. In terms of processing, phosphorylated by FAM20C in the extracellular medium.

It localises to the secreted. It is found in the extracellular space. Its subcellular location is the extracellular matrix. The protein resides in the extracellular vesicle. The protein localises to the endosome. It localises to the multivesicular body. In terms of biological role, APOE is an apolipoprotein, a protein associating with lipid particles, that mainly functions in lipoprotein-mediated lipid transport between organs via the plasma and interstitial fluids. APOE is a core component of plasma lipoproteins and is involved in their production, conversion and clearance. Apolipoproteins are amphipathic molecules that interact both with lipids of the lipoprotein particle core and the aqueous environment of the plasma. As such, APOE associates with chylomicrons, chylomicron remnants, very low density lipoproteins (VLDL) and intermediate density lipoproteins (IDL) but shows a preferential binding to high-density lipoproteins (HDL). It also binds a wide range of cellular receptors including the LDL receptor/LDLR and the very low-density lipoprotein receptor/VLDLR that mediate the cellular uptake of the APOE-containing lipoprotein particles. Finally, APOE also has a heparin-binding activity and binds heparan-sulfate proteoglycans on the surface of cells, a property that supports the capture and the receptor-mediated uptake of APOE-containing lipoproteins by cells. The sequence is that of Apolipoprotein E (APOE) from Balaenoptera acutorostrata scammoni (North Pacific minke whale).